A 233-amino-acid polypeptide reads, in one-letter code: Histone H1-I (233 aa).

2 disordered regions span residues 1–55 (MSDS…HPPV) and 115–233 (TGAS…KKSK). Over residues 17–29 (KAASPAKSPAKSP) the composition is skewed to low complexity. The 75-residue stretch at 51-125 (THPPVSEMVV…GASGSFKMPP (75 aa)) folds into the H15 domain. 2 stretches are compositionally biased toward basic and acidic residues: residues 128-137 (KKVDRPESAP) and 146-155 (TRVERKEKKV). 2 stretches are compositionally biased toward basic residues: residues 172–213 (AAKK…KPTP) and 223–233 (AAARKPAKKSK).

Belongs to the histone H1/H5 family.

The protein localises to the nucleus. Its subcellular location is the chromosome. In terms of biological role, histones H1 are necessary for the condensation of nucleosome chains into higher-order structures. This chain is Histone H1-I, found in Glyptotendipes barbipes (Midge).